Reading from the N-terminus, the 146-residue chain is Large ribosomal subunit protein uL11 (146 aa).

This sequence belongs to the universal ribosomal protein uL11 family. As to quaternary structure, part of the ribosomal stalk of the 50S ribosomal subunit. Interacts with L10 and the large rRNA to form the base of the stalk. L10 forms an elongated spine to which L12 dimers bind in a sequential fashion forming a multimeric L10(L12)X complex. Post-translationally, one or more lysine residues are methylated.

Forms part of the ribosomal stalk which helps the ribosome interact with GTP-bound translation factors. In Buchnera aphidicola subsp. Baizongia pistaciae (strain Bp), this protein is Large ribosomal subunit protein uL11.